Consider the following 177-residue polypeptide: MVATQQGPDRPGIDDPGRGRRIAIDVGSVRIGVASSDPDGILATPVETVPRSKERGPDAPDIRRIIAIVSEYEAVEVIVGLPQTLRGEQGKAAGIATAFAKRLQRAVEPIPVRLSDERLTTVTAARNLRESGVKARGQRPMIDQAAAVEILQGWLDERSRAVKPGESSKDAALEGDL.

A disordered region spans residues 1 to 20 (MVATQQGPDRPGIDDPGRGR).

This sequence belongs to the YqgF nuclease family.

Its subcellular location is the cytoplasm. In terms of biological role, could be a nuclease involved in processing of the 5'-end of pre-16S rRNA. The polypeptide is Putative pre-16S rRNA nuclease (Rhodococcus erythropolis (strain PR4 / NBRC 100887)).